The chain runs to 532 residues: ATP-dependent RNA helicase DBP3 (532 aa).

The segment at 1–78 (MGKRDRTEDD…EVAEEKPKMT (78 aa)) is disordered. The span at 15–58 (KKVKLDKKDKKEKKEKKDKKDKKDKKDKKDKKDKKEKKEKKEKK) shows a compositional bias: basic residues. The Q motif motif lies at 126 to 152 (MEFSHVTLDPRITKVLTKFPRPTPIQA). In terms of domain architecture, Helicase ATP-binding spans 155 to 327 (WPYLLAGKDM…EGFMKTPTKV (173 aa)). 168-175 (AETGSGKT) contributes to the ATP binding site. The DEAD box motif lies at 274–277 (DEAD). Residues 356-502 (RLLDLLRQYA…PVPDELLKFG (147 aa)) form the Helicase C-terminal domain.

This sequence belongs to the DEAD box helicase family. DDX5/DBP2 subfamily.

The protein resides in the nucleus. It localises to the nucleolus. It carries out the reaction ATP + H2O = ADP + phosphate + H(+). Functionally, ATP-dependent RNA helicase required for 60S ribosomal subunit synthesis. Involved in efficient pre-rRNA processing, predominantly at site A3, which is necessary for the normal formation of 25S and 5.8S rRNAs. This is ATP-dependent RNA helicase DBP3 (DBP3) from Yarrowia lipolytica (strain CLIB 122 / E 150) (Yeast).